Here is a 109-residue protein sequence, read N- to C-terminus: Lipoprotein BsmA (109 aa).

The first 24 residues, 1 to 24 (MVSRKRNSVIYRFASLLLVLMLSA), serve as a signal peptide directing secretion. Residue C25 is the site of N-palmitoyl cysteine attachment. The S-diacylglycerol cysteine moiety is linked to residue C25.

It belongs to the BhsA/McbA family.

It is found in the cell membrane. Its function is as follows. Involved in protection of biofilms against oxidative stress. This is Lipoprotein BsmA (bsmA) from Escherichia coli (strain K12).